Reading from the N-terminus, the 488-residue chain is ATP synthase subunit beta (488 aa).

Residue G164–T171 coordinates ATP.

Belongs to the ATPase alpha/beta chains family. F-type ATPases have 2 components, CF(1) - the catalytic core - and CF(0) - the membrane proton channel. CF(1) has five subunits: alpha(3), beta(3), gamma(1), delta(1), epsilon(1). CF(0) has four main subunits: a(1), b(1), b'(1) and c(9-12).

It is found in the cellular thylakoid membrane. The catalysed reaction is ATP + H2O + 4 H(+)(in) = ADP + phosphate + 5 H(+)(out). Produces ATP from ADP in the presence of a proton gradient across the membrane. The catalytic sites are hosted primarily by the beta subunits. In Synechococcus sp. (strain RCC307), this protein is ATP synthase subunit beta.